The following is a 110-amino-acid chain: Protein RALF-like 4 (110 aa).

The signal sequence occupies residues 1 to 23 (MGVKMLLIFGLLILAMVAKSVNA). Positions 24–58 (TYPLTKSCINGQGCIGEDDELESLMDSETNRRQLA) are cleaved as a propeptide — removed in mature form. Cystine bridges form between cysteine 76–cysteine 86 and cysteine 99–cysteine 105.

Belongs to the plant rapid alkalinization factor (RALF) family. In terms of processing, proteolytically cleaved, probably by S1P, a subtilisin-like serine protease (subtilase).

The protein resides in the secreted. Functionally, cell signaling peptide that may regulate plant stress, growth, and development. Mediates a rapid alkalinization of extracellular space by mediating a transient increase in the cytoplasmic Ca(2+) concentration leading to a calcium-dependent signaling events through a cell surface receptor and a concomitant activation of some intracellular mitogen-activated protein kinases. The chain is Protein RALF-like 4 (RALFL4) from Arabidopsis thaliana (Mouse-ear cress).